The sequence spans 346 residues: Carbamoyl phosphate synthase small chain (346 aa).

The CPSase stretch occupies residues M1–E160. The L-glutamine site is built by S39, G209, and G211. The 183-residue stretch at C164–H346 folds into the Glutamine amidotransferase type-1 domain. Catalysis depends on C237, which acts as the Nucleophile. L-glutamine contacts are provided by L238, Q241, N280, G282, and Y283. Active-site residues include H320 and E322.

Belongs to the CarA family. In terms of assembly, composed of two chains; the small (or glutamine) chain promotes the hydrolysis of glutamine to ammonia, which is used by the large (or ammonia) chain to synthesize carbamoyl phosphate. Tetramer of heterodimers (alpha,beta)4.

The catalysed reaction is hydrogencarbonate + L-glutamine + 2 ATP + H2O = carbamoyl phosphate + L-glutamate + 2 ADP + phosphate + 2 H(+). The enzyme catalyses L-glutamine + H2O = L-glutamate + NH4(+). It participates in amino-acid biosynthesis; L-arginine biosynthesis; carbamoyl phosphate from bicarbonate: step 1/1. It functions in the pathway pyrimidine metabolism; UMP biosynthesis via de novo pathway; (S)-dihydroorotate from bicarbonate: step 1/3. Its function is as follows. Small subunit of the glutamine-dependent carbamoyl phosphate synthetase (CPSase). CPSase catalyzes the formation of carbamoyl phosphate from the ammonia moiety of glutamine, carbonate, and phosphate donated by ATP, constituting the first step of 2 biosynthetic pathways, one leading to arginine and/or urea and the other to pyrimidine nucleotides. The small subunit (glutamine amidotransferase) binds and cleaves glutamine to supply the large subunit with the substrate ammonia. The protein is Carbamoyl phosphate synthase small chain of Pyrobaculum aerophilum (strain ATCC 51768 / DSM 7523 / JCM 9630 / CIP 104966 / NBRC 100827 / IM2).